The following is an 849-amino-acid chain: Dopamine receptor 2 (849 aa).

Topologically, residues 1–39 (MEAGETWNVSLEWPPPSLDLSTITQTPSTIVGSGIPLNY) are extracellular. N-linked (GlcNAc...) asparagine glycosylation occurs at asparagine 8. Residues 40 to 60 (AGLSLIVIPLITLLGNLLVII) traverse the membrane as a helical segment. The Cytoplasmic portion of the chain corresponds to 61–70 (SVLRYRALQS). A helical membrane pass occupies residues 71–91 (AINFLILGLAVADLLVAIIVM). The Extracellular segment spans residues 92-112 (PYAVYVYVTNGDWYLGNLMCD). Cysteine 111 and cysteine 190 are joined by a disulfide. Residues 113–133 (IYMASDVCCSTASILLLAVIS) traverse the membrane as a helical segment. At 134-155 (FDRYRAVSLPIQYSRQSQNVKR) the chain is on the cytoplasmic side. A helical membrane pass occupies residues 156 to 176 (VWTLIAVIWLVSLTLASPMVF). At 177–203 (GVNVRPPDANPYECRFYNAEFSILSSM) the chain is on the extracellular side. The segment at 183-849 (PDANPYECRF…HHFSNKQAHV (667 aa)) is required for the interaction with gpa-14. A helical transmembrane segment spans residues 204-224 (ISFVIPCFLVLFVYIRIIIAL). The Cytoplasmic segment spans residues 225 to 759 (KKREKAAKMR…QRKEKRATKT (535 aa)). Residues 450–515 (RRSSYADDSQ…NNSRTASITN (66 aa)) form a disordered region. The span at 457 to 470 (DSQPTSSQTSSGDG) shows a compositional bias: low complexity. Basic residues predominate over residues 477 to 498 (GQKRFRNLSRNYSTKHHRKVVK). Polar residues predominate over residues 501–515 (RGNSRNNSRTASITN). The helical transmembrane segment at 760 to 780 (LGVVVGVFLVCWVPFFVINIL) threads the bilayer. The Extracellular portion of the chain corresponds to 781 to 798 (NAVCILLNKDSCQVGYDL). The chain crosses the membrane as a helical span at residues 799-819 (FFYCTWIGYMNSFMNPIIYTI). At 820–849 (FNTEFRRAFKSIIFGRNSTRHHFSNKQAHV) the chain is on the cytoplasmic side.

The protein belongs to the G-protein coupled receptor 1 family. In terms of assembly, interacts (via C-terminus) with the G-alpha protein gpa-14; the interaction is direct. As to expression, expressed in all dopaminergic neurons. Expressed in neurons around the nerve ring and the posterior side of the body including PDE neurons. In hermaphrodites, expressed in the head and tail ganglia including in the RIA interneuron pair, and in a subset of sublateral interneurons and the PDA neuron in the tail. Expressed in cholinergic SIA neurons. Also expressed in the male tail. In males, expressed in the dorsal spicule protractor, ventral spicule protractor, dorsal spicule retractor and ventral spicule retractor muscles and the sensory post-cloacal sensilla B (PCB) neuron. In males, expressed in the sensory hook neurons HOA.

It is found in the cell membrane. G-protein coupled receptor which binds to the neurotransmitter dopamine with high affinity leading to the activation of an associated G-protein and downstream signaling pathways. Couples to G-proteins to inhibit adenylate cyclase (AC) activity and cAMP production. Inhibits synaptic vesicle fusion to negatively regulate the release of dopamine at dopaminergic neuron synapses. Antagonizes octopamine signaling in response to food by promoting the dopamine-mediated suppression of crh-1/CREB1 transcription factor activation in cholinergic SIA neurons. This is most likely in association with the G(o)-alpha G-protein subunit goa-1. In association with the G-alpha protein gpa-14, modulates two types of learning behavior: touch habituation and chemosensory associative conditioning. May act partly via tsp-17 to negatively regulate dopamine reuptake transporter dat-1 activity. Plays a role in behavioral plasticity and regulates the decision-making process when conflicting alternatives are present. Promotes male mating behavior by antagonizing acetylcholine signaling to control the protrusions of copulatory spicules from the tail of males during hermaphrodite vulval location. Modulates unc-7 activity at gap junctions to promote inhibitory neuronal signaling transduction between chemosensory and mechanosensory neurons, and thus ensures spicule insertion attempts are confined to the hermaphrodite vulva during copulation. Its function is as follows. G-protein coupled receptor which binds to the neurotransmitter dopamine with high affinity leading to the activation of an associated G-protein and downstream signaling pathways. Couples to G-proteins to inhibit adenylate cyclase (AC) activity and cAMP production. The protein is Dopamine receptor 2 of Caenorhabditis elegans.